Here is a 102-residue protein sequence, read N- to C-terminus: 10 kDa heat shock protein, mitochondrial (102 aa).

Position 2 is an N-acetylalanine (Ala2). At Lys8 the chain carries N6-acetyllysine. Lys28 is subject to N6-succinyllysine. Lys40 carries the post-translational modification N6-acetyllysine; alternate. An N6-malonyllysine; alternate mark is found at Lys40, Lys54, and Lys56. N6-succinyllysine; alternate is present on residues Lys40, Lys54, Lys56, Lys66, and Lys70. N6-acetyllysine; alternate occurs at positions 56, 66, and 70. A Phosphothreonine modification is found at Thr79. An N6-acetyllysine; alternate mark is found at Lys80 and Lys86. N6-succinyllysine; alternate occurs at positions 80 and 86. At Lys99 the chain carries N6-acetyllysine.

This sequence belongs to the GroES chaperonin family. In terms of assembly, homoheptamer arranged in a ring structure. 2 heptameric Hsp10 rings interact with a Hsp60 tetradecamer in the structure of a back-to-back double heptameric ring to form the symmetrical football complex.

It is found in the mitochondrion matrix. Co-chaperonin implicated in mitochondrial protein import and macromolecular assembly. Together with Hsp60, facilitates the correct folding of imported proteins. May also prevent misfolding and promote the refolding and proper assembly of unfolded polypeptides generated under stress conditions in the mitochondrial matrix. The functional units of these chaperonins consist of heptameric rings of the large subunit Hsp60, which function as a back-to-back double ring. In a cyclic reaction, Hsp60 ring complexes bind one unfolded substrate protein per ring, followed by the binding of ATP and association with 2 heptameric rings of the co-chaperonin Hsp10. This leads to sequestration of the substrate protein in the inner cavity of Hsp60 where, for a certain period of time, it can fold undisturbed by other cell components. Synchronous hydrolysis of ATP in all Hsp60 subunits results in the dissociation of the chaperonin rings and the release of ADP and the folded substrate protein. The protein is 10 kDa heat shock protein, mitochondrial (HSPE1) of Bos taurus (Bovine).